The sequence spans 651 residues: MNPSTPSLLYTSIFFYFTIIATQTLSLDPKFKACEPKSCGKGPQISYPFYLSGKQESFCGYPSFELTCDDEEKLPVLGISGEEYVIKNISYLTQSFQVVNSKASHDPCPRPLNNLTLHRTPFFVNPSHINFTILYNCSDHLLEDFRTYPLTCARNTSLLRSFGVFDRKKLGKEKQIASMSCQKLVDVPVLASNESDVMGMTYVEILKRGFVLNWTANSCFRCITSGGRCGTDQQEFVCLCPDGPKLHDTCTNGKNDKRRRVIVKVLIGASAAVVGLIAASIFWYVYHRRKTKSYRNSSALLPRNISSDPSAKSFDIEKAEELLVGVHIFSYEELEEATNNFDPSKELGDGGFGTVYYGKLKDGRSVAVKRLYDNNFKRAEQFRNEVEILTGLRHPNLVALFGCSSKQSRDLLLVYEYVANGTLADHLHGPQANPSSLPWSIRLKIAVETASALKYLHASKIIHRDVKSNNILLDQNFNVKVADFGLSRLFPMDKTHVSTAPQGTPGYVDPDYHLCYQLSNKSDVYSFAVVLMELISSLPAVDITRPRQEINLSNMAVVKIQNHELRDMVDPSLGFDTDTRVRQTVIAVAELAFQCLQSDKDLRPCMSHVQDTLTRIQNNGFGSEMDVVDVNKSGPLVAQSPDSVIVKWDSK.

A signal peptide spans 1–26 (MNPSTPSLLYTSIFFYFTIIATQTLS). Over 27 to 264 (LDPKFKACEP…NDKRRRVIVK (238 aa)) the chain is Extracellular. Asparagine 88, asparagine 114, asparagine 130, asparagine 136, asparagine 155, asparagine 193, and asparagine 213 each carry an N-linked (GlcNAc...) asparagine glycan. A helical membrane pass occupies residues 265-285 (VLIGASAAVVGLIAASIFWYV). The Cytoplasmic segment spans residues 286–651 (YHRRKTKSYR…DSVIVKWDSK (366 aa)). The Protein kinase domain maps to 341–613 (FDPSKELGDG…PCMSHVQDTL (273 aa)). ATP contacts are provided by residues 347–355 (LGDGGFGTV) and lysine 369. At tyrosine 415 the chain carries Phosphotyrosine. Catalysis depends on aspartate 465, which acts as the Proton acceptor. Residue serine 498 is modified to Phosphoserine. Threonine 499 and threonine 504 each carry phosphothreonine. Tyrosine 512 bears the Phosphotyrosine mark.

Belongs to the protein kinase superfamily. Ser/Thr protein kinase family.

It localises to the cell membrane. The protein resides in the membrane. It catalyses the reaction L-seryl-[protein] + ATP = O-phospho-L-seryl-[protein] + ADP + H(+). The catalysed reaction is L-threonyl-[protein] + ATP = O-phospho-L-threonyl-[protein] + ADP + H(+). Probable receptor-like serine/threonine-protein kinase involved in abscisic acid (ABA) signaling. Acts as a positive regulator of abiotic stress response. The protein is LEAF RUST 10 DISEASE-RESISTANCE LOCUS RECEPTOR-LIKE PROTEIN KINASE-like 1.2 of Arabidopsis thaliana (Mouse-ear cress).